A 280-amino-acid chain; its full sequence is Inner membrane ABC transporter permease protein YcjP (280 aa).

The Cytoplasmic segment spans residues 1–10; the sequence is MATNKRTLSR. The helical transmembrane segment at 11–31 threads the bilayer; the sequence is IGFYCGLALFLIITLFPFFVM. Residues 32–53 are Periplasmic-facing; the sequence is LMTSFKGAKEAISLHPTLLPQQ. The helical transmembrane segment at 54-74 threads the bilayer; that stretch reads WTLEHYVDIFNPMIFPFVDYF. One can recognise an ABC transmembrane type-1 domain in the interval 74–265; the sequence is FRNSLVVSVV…LPVVIMYALS (192 aa). Over 75–77 the chain is Cytoplasmic; the sequence is RNS. Residues 78–98 traverse the membrane as a helical segment; the sequence is LVVSVVSSVVAVFLGILGAYA. Over 99-117 the chain is Periplasmic; it reads LSRLRFKGRMTINASFYTV. A helical transmembrane segment spans residues 118–138; that stretch reads YMFSGILLVVPLFKIITALGI. The Cytoplasmic segment spans residues 139–140; it reads YD. Residues 141-161 traverse the membrane as a helical segment; sequence TEMALIITMVTQTLPTAVFML. Over 162–189 the chain is Periplasmic; the sequence is KSYFDTIPDEIEEAAMMDGLNRLQIIFR. Residues 190 to 210 form a helical membrane-spanning segment; it reads ITVPLAMSGLISVFVYCFMVA. Over 211 to 214 the chain is Cytoplasmic; sequence WNDY. The chain crosses the membrane as a helical span at residues 215 to 235; sequence LFASIFLSSASNFTLPVGLNA. The Periplasmic segment spans residues 236-242; it reads LFSTPDY. Residues 243–263 form a helical membrane-spanning segment; it reads IWGRMMAASLVTALPVVIMYA. The Cytoplasmic portion of the chain corresponds to 264-280; the sequence is LSERFIKSGLTAGGVKG.

Belongs to the binding-protein-dependent transport system permease family. MalFG subfamily.

It is found in the cell inner membrane. Its function is as follows. Probably part of the binding-protein-dependent transport system YcjNOP. Probably responsible for the translocation of the substrate across the membrane. This chain is Inner membrane ABC transporter permease protein YcjP (ycjP), found in Escherichia coli (strain K12).